The chain runs to 413 residues: S-adenosylmethionine synthase (413 aa).

H15 provides a ligand contact to ATP. D17 contacts Mg(2+). E43 is a K(+) binding site. L-methionine-binding residues include E56 and Q100. The segment at 100–110 is flexible loop; the sequence is QSPDISQGVND. Residues 171–173, 248–249, D257, 263–264, A280, and K284 each bind ATP; these read DGK, KF, and RK. An L-methionine-binding site is contributed by D257. Position 288 (K288) interacts with L-methionine.

This sequence belongs to the AdoMet synthase family. Homotetramer; dimer of dimers. It depends on Mg(2+) as a cofactor. Requires K(+) as cofactor.

The protein resides in the cytoplasm. The enzyme catalyses L-methionine + ATP + H2O = S-adenosyl-L-methionine + phosphate + diphosphate. It participates in amino-acid biosynthesis; S-adenosyl-L-methionine biosynthesis; S-adenosyl-L-methionine from L-methionine: step 1/1. Catalyzes the formation of S-adenosylmethionine (AdoMet) from methionine and ATP. The overall synthetic reaction is composed of two sequential steps, AdoMet formation and the subsequent tripolyphosphate hydrolysis which occurs prior to release of AdoMet from the enzyme. The protein is S-adenosylmethionine synthase of Prochlorococcus marinus (strain MIT 9301).